Consider the following 311-residue polypeptide: MVSTATQIGHFSFDNCLMNAAGVYCMTKEELIEVEKSQAASFVTKTGTLEVRPGNPEPRYADTRLGSINSMGLPNNGFRYYLDFVSDLAKTGQHKPHFLSVVGLSPTETETILKAIMASDYEGLVELNLSCPNVPGKPQIAYDFETTNQLLENLFTYYTKPLGIKLPPYFDIVHFDQAAAIFNKYPLSFVNCVNSIGNGLVIEDEQVLIKPKNGFGGIGGDYIKPTALANVHAFYKRLKPSIHIIGTGGVKTGRDAFEHILCGASMVQIGTALHQEGPAIFERVTKELKTIMVEKGYQSLNDFRGNLRYKD.

Substrate-binding positions include Lys-45, 69-73, and Asn-128; that span reads NSMGL. 45–46 lines the FMN pocket; that stretch reads KT. Asn-128 is a binding site for FMN. Cys-131 (nucleophile) is an active-site residue. Residues Lys-165 and Val-193 each contribute to the FMN site. 194 to 195 lines the substrate pocket; that stretch reads NS. FMN contacts are provided by residues Gly-220, 248–249, and 270–271; these read GG and GT.

This sequence belongs to the dihydroorotate dehydrogenase family. Type 1 subfamily. As to quaternary structure, homodimer. It depends on FMN as a cofactor.

It localises to the cytoplasm. It carries out the reaction (S)-dihydroorotate + fumarate = orotate + succinate. It participates in pyrimidine metabolism; UMP biosynthesis via de novo pathway. In terms of biological role, catalyzes the conversion of dihydroorotate to orotate with fumarate as the electron acceptor. This Streptococcus pyogenes serotype M5 (strain Manfredo) protein is Putative dihydroorotate dehydrogenase A (fumarate) (pyrD).